The sequence spans 88 residues: Pape peptide (88 aa).

Residues 1–22 (MNRKTLLVIFFVTLLIAEEVNS) form the signal peptide. Residues 23 to 45 (FRLGGFLKKIWRSKLVKRLRSKG) constitute a propeptide that is removed on maturation. The disordered stretch occupies residues 49–88 (LKEALAPEPAPEPAPEPAPEAAPEAAPEPAAAAPERRRRR). Over residues 56-68 (EPAPEPAPEPAPE) the composition is skewed to pro residues. 3 PAPE repeats span residues 57 to 60 (PAPE), 61 to 64 (PAPE), and 65 to 68 (PAPE). The span at 69–81 (AAPEAAPEPAAAA) shows a compositional bias: low complexity.

In terms of tissue distribution, expressed by the venom gland.

The protein localises to the secreted. This chain is Pape peptide, found in Tityus serrulatus (Brazilian scorpion).